We begin with the raw amino-acid sequence, 723 residues long: DNA-binding protein RFX2 (723 aa).

A disordered region spans residues 1-46 (MQNSEGGADSPASVALRPSAAAPPVPASPQRVLVQAASSAPKGAQM). Residues 10–20 (SPASVALRPSA) are compositionally biased toward low complexity. Serine 28 bears the Phosphoserine mark. The RFX-type winged-helix DNA-binding region spans 199-274 (HLQWLLDNYE…YHYYGIRLKP (76 aa)). The disordered stretch occupies residues 292–332 (QQPMHQKPRYRPAQKTDSLGDSGSHSSLHSTPEQTMAAQSQ). A compositionally biased stretch (low complexity) spans 307-322 (TDSLGDSGSHSSLHST). The span at 323–332 (PEQTMAAQSQ) shows a compositional bias: polar residues. Phosphoserine is present on serine 416. The tract at residues 689-723 (GDERRGSEAGPDAHSLGEPLVKRERSDPNHSLQGI) is disordered.

Belongs to the RFX family. Homodimer; probably only forms homodimers in testis. Heterodimer; heterodimerizes with RFX1 and RFX3.

The protein localises to the nucleus. It localises to the cytoplasm. Its function is as follows. Transcription factor that acts as a key regulator of spermatogenesis. Acts by regulating expression of genes required for the haploid phase during spermiogenesis, such as genes required for cilium assembly and function. Recognizes and binds the X-box, a regulatory motif with DNA sequence 5'-GTNRCC(0-3N)RGYAAC-3' present on promoters. Probably activates transcription of the testis-specific histone gene H1-6. The polypeptide is DNA-binding protein RFX2 (RFX2) (Macaca fascicularis (Crab-eating macaque)).